The following is a 429-amino-acid chain: Adenylosuccinate synthetase (429 aa).

GTP-binding positions include 12-18 and 40-42; these read GDEGKGK and GHT. Asp-13 (proton acceptor) is an active-site residue. Mg(2+) contacts are provided by Asp-13 and Gly-40. IMP contacts are provided by residues 13–16, 38–41, Thr-129, Arg-143, Gln-223, Thr-238, and Arg-302; these read DEGK and NAGH. Residue His-41 is the Proton donor of the active site. 298–304 is a substrate binding site; it reads VVTGRKR. GTP contacts are provided by residues Arg-304, 330 to 332, and 412 to 414; these read KLD and STS.

This sequence belongs to the adenylosuccinate synthetase family. As to quaternary structure, homodimer. The cofactor is Mg(2+).

Its subcellular location is the cytoplasm. It carries out the reaction IMP + L-aspartate + GTP = N(6)-(1,2-dicarboxyethyl)-AMP + GDP + phosphate + 2 H(+). It functions in the pathway purine metabolism; AMP biosynthesis via de novo pathway; AMP from IMP: step 1/2. Plays an important role in the de novo pathway of purine nucleotide biosynthesis. Catalyzes the first committed step in the biosynthesis of AMP from IMP. The protein is Adenylosuccinate synthetase of Brucella abortus (strain 2308).